Here is a 207-residue protein sequence, read N- to C-terminus: Ras-related protein Rab-8A (207 aa).

Residues Ser17, Gly18, Val19, Gly20, Lys21, Thr22, Cys23, Ser39, and Thr40 each contribute to the GTP site. Residue Thr22 participates in Mg(2+) binding. 2 consecutive short sequence motifs (switch) follow at residues 31–45 (DAFNATFISTIGIDF) and 63–80 (DTAGQERFRTITTAYYRG). Mg(2+) is bound by residues Thr40 and Asp63. The GTP site is built by Gly66, Asn121, Lys122, Asp124, Ala152, and Lys153. Cys204 bears the Cysteine methyl ester mark. The S-geranylgeranyl cysteine moiety is linked to residue Cys204. The propeptide at 205 to 207 (VLL) is removed in mature form.

Belongs to the small GTPase superfamily. Rab family. Mg(2+) serves as cofactor.

It is found in the cell membrane. The protein resides in the golgi apparatus. Its subcellular location is the endosome membrane. It localises to the recycling endosome membrane. The protein localises to the cell projection. It is found in the cilium. The protein resides in the cytoplasmic vesicle. Its subcellular location is the phagosome membrane. It localises to the cytoplasm. The protein localises to the cytoskeleton. It is found in the microtubule organizing center. The protein resides in the centrosome. Its subcellular location is the centriole. It localises to the cilium basal body. The protein localises to the midbody. The enzyme catalyses GTP + H2O = GDP + phosphate + H(+). Regulated by guanine nucleotide exchange factors (GEFs) which promote the exchange of bound GDP for free GTP, GTPase activating proteins (GAPs) which increase the GTP hydrolysis activity, and GDP dissociation inhibitors (GDIs) which inhibit the dissociation of the nucleotide from the GTPase. Activated in response to insulin. Functionally, the small GTPases Rab are key regulators of intracellular membrane trafficking, from the formation of transport vesicles to their fusion with membranes. Rabs cycle between an inactive GDP-bound form and an active GTP-bound form that is able to recruit to membranes different sets of downstream effectors directly responsible for vesicle formation, movement, tethering and fusion. RAB8A is involved in polarized vesicular trafficking and neurotransmitter release. Together with RAB11A, RAB3IP, the exocyst complex, PARD3, PRKCI, ANXA2, CDC42 and DNMBP promotes transcytosis of PODXL to the apical membrane initiation sites (AMIS), apical surface formation and lumenogenesis. Regulates the compacted morphology of the Golgi. Together with MYO5B and RAB11A participates in epithelial cell polarization. Also involved in membrane trafficking to the cilium and ciliogenesis. Together with MICALL2, may also regulate adherens junction assembly. May play a role in insulin-induced transport to the plasma membrane of the glucose transporter GLUT4 and therefore play a role in glucose homeostasis. Involved in autophagy. Participates in the export of a subset of neosynthesized proteins through a Rab8-Rab10-Rab11-dependent endososomal export route. Targeted to and stabilized on stressed lysosomes through LRRK2 phosphorylation. Suppresses stress-induced lysosomal enlargement through EHBP1 and EHNP1L1 effector proteins. The chain is Ras-related protein Rab-8A (RAB8A) from Gallus gallus (Chicken).